A 254-amino-acid chain; its full sequence is Dihydroorotate dehydrogenase B (NAD(+)), electron transfer subunit (254 aa).

In terms of domain architecture, FAD-binding FR-type spans 1–99 (MLQTEMKVIQ…LGPLGKGFDI (99 aa)). FAD is bound by residues 50 to 53 (RPIS), 67 to 69 (LYR), and 74 to 75 (GT). 4 residues coordinate [2Fe-2S] cluster: cysteine 218, cysteine 223, cysteine 226, and cysteine 241.

It belongs to the PyrK family. As to quaternary structure, heterotetramer of 2 PyrK and 2 PyrD type B subunits. Requires [2Fe-2S] cluster as cofactor. The cofactor is FAD.

It participates in pyrimidine metabolism; UMP biosynthesis via de novo pathway; orotate from (S)-dihydroorotate (NAD(+) route): step 1/1. Functionally, responsible for channeling the electrons from the oxidation of dihydroorotate from the FMN redox center in the PyrD type B subunit to the ultimate electron acceptor NAD(+). The protein is Dihydroorotate dehydrogenase B (NAD(+)), electron transfer subunit of Listeria monocytogenes serotype 4a (strain HCC23).